The chain runs to 66 residues: MSQPLTVECPTCGAPVEWKSDNKYRPFCSDRCKLIDLGAWAAEEHAIPGDTLEDDIFSADLPPREH.

Zn(2+) is bound by residues C9, C12, C28, and C32.

This sequence belongs to the DNA gyrase inhibitor YacG family. Interacts with GyrB. Zn(2+) is required as a cofactor.

Functionally, inhibits all the catalytic activities of DNA gyrase by preventing its interaction with DNA. Acts by binding directly to the C-terminal domain of GyrB, which probably disrupts DNA binding by the gyrase. The protein is DNA gyrase inhibitor YacG of Pseudomonas aeruginosa (strain LESB58).